A 1464-amino-acid polypeptide reads, in one-letter code: MGARGSVLSGKKTDELEKVRLRPGGKKRYMLKHIVWAVNELERFGLAESRLGSKEGCRKIRKVLGPLVPTGSENLKSLYNTVCVIFCLHAEEKVKDTEEAKKIAQRHLAADTEKMPAMSKPSKPTSRLAYPVQQIAGNYSHLPLSPRTLNAWVKLVEEKKFGAEVVPGFQALSEGCTPYDINQMLNCVGEHQAAMQIIREIINEEAADWDQQHPSPGPMPAGQLREPRGSDIAGTTSTVEEQIQWMYRPQNPVPVGNIYRRWIQLGLQKCVRMYNPTNILDIKQGPKEPFQSYVDRFYKSLRAEQTDPAVKNWMTQTLLIQNANPDCKLVLKGLGMNPTLEEMLTACQGIGGPGQKARLMAEALKEALTPSTNPFAAAQPRAGKRTVTCWNCGKAGHTARQCKAPRRQGCWKCGQQGHIMSKCPERQAGFLRVRPLGKEASQFPRPGTPGDSAICAPDEPSIRHDTSGCDSICTPCRSSRGDAKELHATREEAEGEQRETLQGGDRGFAAPQFSLWRRPVVKATIEGQSVEVLLDTGADDSIVAGIELGSNYTPKIVGGIGGFINTNEYKNVEIEVVGKRVRATVMTGDTPINIFGRNILNSLGMTLNFPVARIEPVKVQLKPEKDGPKIRQWPLSKEKILALKEICEKMEKEGQLEEAPPTNPYNSPTFAIKKKDKNKWRMLIDFRELNKVTQEFTEVQLGIPHPAGLASKKRITVLDVGDAYFSVPLDPDFRQYTAFTLPAVNNAEPGKRYLYKVLPQGWKGSPAIFQYTMAKVLDPFRKANNDVTIIQYMDDILVASDRSDLEHDRVVSQLKELLNNMGFSTPEEKFQKDPPFKWMGYELWPKKWKLQKIQLPEKEVWTVNDIQKLVGVLNWAAQLFPGIKTRHICKLIRGKMTLTEEVQWTELAEAEFQENKIILEQEQEGSYYKEGVPLEATVQKNLANQWTYKIHQGDKILKVGKYAKVKNTHTNGVRLLAHVVQKIGKEALVIWGEIPMFHLPVERETWDQWWTDYWQVTWIPEWDFVSTPPLIRLAYNLVKDPLEGVETYYTDGSCNKASKEGKAGYVTDRGKDKVKPLEQTTNQQAELEAFALALQDSGPQVNIIVDSQYVMGIVAAQPTETESPIVREIIEEMIKKEKIYVGWVPAHKGLGGNQEVDHLVSQGIRQILFLEKIEPAQEEHEKYHNNVKELVHKFGIPQLVARQIVNSCDKCQQKGEAIHGQVNSELGTWQMDCTHLEGKVIIVAVHVASGFIEAEVIPQETGRQTALFLLKLASRWPITHLHTDNGANFTSQDVKMAAWWIGIEQTFGVPYNPESQGVVEAMNHHLKNQIDRIRDQAVSIETVVLMATHCMNFKRRGGIGDMTPAERIVNMITTEQEIQFLQTKNLKFQNFRVYYREGRDQLWKGPGDLLWKGEGAVIIKVGTEIKVIPRRKAKIIRNYGGGKELDCSADVEDTMQAREVAQSN.

Glycine 2 carries N-myristoyl glycine; by host lipidation. The segment at 7 to 31 (VLSGKKTDELEKVRLRPGGKKRYML) is interaction with Gp41. The short motif at 16-22 (LEKVRLR) is the Nuclear export signal element. The Nuclear localization signal signature appears at 26–32 (KKRYMLK). A Phosphotyrosine; by host modification is found at tyrosine 130. Positions 186-223 (NCVGEHQAAMQIIREIINEEAADWDQQHPSPGPMPAGQ) are interaction with human PPIA/CYPA and NUP153. The interval 274 to 360 (YNPTNILDIK…GGPGQKARLM (87 aa)) is dimerization/Multimerization of capsid protein p24. CCHC-type zinc fingers lie at residues 387–404 (VTCW…QCKA) and 408–425 (QGCW…KCPE). The segment covering 483 to 499 (AKELHATREEAEGEQRE) has biased composition (basic and acidic residues). The interval 483–504 (AKELHATREEAEGEQRETLQGG) is disordered. Positions 511-515 (PQFSL) are dimerization of protease. Positions 531 to 600 (EVLLDTGADD…PINIFGRNIL (70 aa)) constitute a Peptidase A2 domain. Aspartate 535 (for protease activity; shared with dimeric partner) is an active-site residue. 2 dimerization of protease regions span residues 559–565 (GIGGFIN) and 598–610 (NILN…LNFP). The 191-residue stretch at 654-844 (GQLEEAPPTN…PFKWMGYELW (191 aa)) folds into the Reverse transcriptase domain. Aspartate 719, aspartate 794, and aspartate 795 together coordinate Mg(2+). Residues 836–844 (FKWMGYELW) are RT 'primer grip'. A Tryptophan repeat motif motif is present at residues 1006-1022 (WDQWWTDYWQVTWIPEW). The RNase H type-1 domain occupies 1042–1165 (LEGVETYYTD…VDHLVSQGIR (124 aa)). Mg(2+)-binding residues include aspartate 1051, glutamate 1086, aspartate 1106, and aspartate 1157. Residues 1171–1212 (EKIEPAQEEHEKYHNNVKELVHKFGIPQLVARQIVNSCDKCQ) form an Integrase-type zinc finger. Residues histidine 1180, histidine 1184, cysteine 1208, and cysteine 1211 each contribute to the Zn(2+) site. In terms of domain architecture, Integrase catalytic spans 1222–1373 (VNSELGTWQM…PAERIVNMIT (152 aa)). Mg(2+) contacts are provided by aspartate 1232, aspartate 1284, and glutamate 1320. The integrase-type DNA-binding region spans 1391–1438 (FRVYYREGRDQLWKGPGDLLWKGEGAVIIKVGTEIKVIPRRKAKIIRN).

Homotrimer; further assembles as hexamers of trimers. Interacts with gp41 (via C-terminus). Interacts with host CALM1; this interaction induces a conformational change in the Matrix protein, triggering exposure of the myristate group. Interacts with host AP3D1; this interaction allows the polyprotein trafficking to multivesicular bodies during virus assembly. Part of the pre-integration complex (PIC) which is composed of viral genome, matrix protein, Vpr and integrase. In terms of assembly, homodimer; the homodimer further multimerizes as homohexamers or homopentamers. Interacts with human PPIA/CYPA. Interacts with human NUP153. Interacts with host PDZD8; this interaction stabilizes the capsid. Interacts with monkey TRIM5; this interaction destabilizes the capsid. As to quaternary structure, homodimer, whose active site consists of two apposed aspartic acid residues. Heterodimer of p66 RT and p51 RT (RT p66/p51). Heterodimerization of RT is essential for DNA polymerase activity. The overall folding of the subdomains is similar in p66 RT and p51 RT but the spatial arrangements of the subdomains are dramatically different. In terms of assembly, homotetramer; may further associate as a homohexadecamer. Part of the pre-integration complex (PIC) which is composed of viral genome, matrix protein, Vpr and integrase. Interacts with human SMARCB1/INI1 and human PSIP1/LEDGF isoform 1. Interacts with human KPNA3; this interaction might play a role in nuclear import of the pre-integration complex. Interacts with human NUP153; this interaction might play a role in nuclear import of the pre-integration complex. Requires Mg(2+) as cofactor. Post-translationally, specific enzymatic cleavages by the viral protease yield mature proteins. The protease is released by autocatalytic cleavage. The polyprotein is cleaved during and after budding, this process is termed maturation. Proteolytic cleavage of p66 RT removes the RNase H domain to yield the p51 RT subunit. Nucleocapsid protein p7 might be further cleaved after virus entry.

Its subcellular location is the host cell membrane. It localises to the host endosome. The protein resides in the host multivesicular body. The protein localises to the virion membrane. It is found in the host nucleus. Its subcellular location is the host cytoplasm. It localises to the virion. The catalysed reaction is Endopeptidase for which the P1 residue is preferably hydrophobic.. It carries out the reaction Endohydrolysis of RNA in RNA/DNA hybrids. Three different cleavage modes: 1. sequence-specific internal cleavage of RNA. Human immunodeficiency virus type 1 and Moloney murine leukemia virus enzymes prefer to cleave the RNA strand one nucleotide away from the RNA-DNA junction. 2. RNA 5'-end directed cleavage 13-19 nucleotides from the RNA end. 3. DNA 3'-end directed cleavage 15-20 nucleotides away from the primer terminus.. The enzyme catalyses 3'-end directed exonucleolytic cleavage of viral RNA-DNA hybrid.. It catalyses the reaction DNA(n) + a 2'-deoxyribonucleoside 5'-triphosphate = DNA(n+1) + diphosphate. Its activity is regulated as follows. Protease: The viral protease is inhibited by many synthetic protease inhibitors (PIs), such as amprenavir, atazanavir, indinavir, loprinavir, nelfinavir, ritonavir and saquinavir. Use of protease inhibitors in tritherapy regimens permit more ambitious therapeutic strategies. Reverse transcriptase/ribonuclease H: RT can be inhibited either by nucleoside RT inhibitors (NRTIs) or by non nucleoside RT inhibitors (NNRTIs). NRTIs act as chain terminators, whereas NNRTIs inhibit DNA polymerization by binding a small hydrophobic pocket near the RT active site and inducing an allosteric change in this region. Classical NRTIs are abacavir, adefovir (PMEA), didanosine (ddI), lamivudine (3TC), stavudine (d4T), tenofovir (PMPA), zalcitabine (ddC), and zidovudine (AZT). Classical NNRTIs are atevirdine (BHAP U-87201E), delavirdine, efavirenz (DMP-266), emivirine (I-EBU), and nevirapine (BI-RG-587). The tritherapies used as a basic effective treatment of AIDS associate two NRTIs and one NNRTI. Its function is as follows. Mediates, with Gag polyprotein, the essential events in virion assembly, including binding the plasma membrane, making the protein-protein interactions necessary to create spherical particles, recruiting the viral Env proteins, and packaging the genomic RNA via direct interactions with the RNA packaging sequence (Psi). Gag-Pol polyprotein may regulate its own translation, by the binding genomic RNA in the 5'-UTR. At low concentration, the polyprotein would promote translation, whereas at high concentration, the polyprotein would encapsidate genomic RNA and then shut off translation. Targets the polyprotein to the plasma membrane via a multipartite membrane-binding signal, that includes its myristoylated N-terminus. Matrix protein is part of the pre-integration complex. Implicated in the release from host cell mediated by Vpu. Binds to RNA. Functionally, forms the conical core that encapsulates the genomic RNA-nucleocapsid complex in the virion. Most core are conical, with only 7% tubular. The core is constituted by capsid protein hexamer subunits. The core is disassembled soon after virion entry. Host restriction factors such as TRIM5-alpha or TRIMCyp bind retroviral capsids and cause premature capsid disassembly, leading to blocks in reverse transcription. Capsid restriction by TRIM5 is one of the factors which restricts HIV-1 to the human species. Host PIN1 apparently facilitates the virion uncoating. On the other hand, interactions with PDZD8 or CYPA stabilize the capsid. In terms of biological role, encapsulates and protects viral dimeric unspliced genomic RNA (gRNA). Binds these RNAs through its zinc fingers. Acts as a nucleic acid chaperone which is involved in rearangement of nucleic acid secondary structure during gRNA retrotranscription. Also facilitates template switch leading to recombination. As part of the polyprotein, participates in gRNA dimerization, packaging, tRNA incorporation and virion assembly. Its function is as follows. Aspartyl protease that mediates proteolytic cleavages of Gag and Gag-Pol polyproteins during or shortly after the release of the virion from the plasma membrane. Cleavages take place as an ordered, step-wise cascade to yield mature proteins. This process is called maturation. Displays maximal activity during the budding process just prior to particle release from the cell. Also cleaves Nef and Vif, probably concomitantly with viral structural proteins on maturation of virus particles. Hydrolyzes host EIF4GI and PABP1 in order to shut off the capped cellular mRNA translation. The resulting inhibition of cellular protein synthesis serves to ensure maximal viral gene expression and to evade host immune response. Multifunctional enzyme that converts the viral RNA genome into dsDNA in the cytoplasm, shortly after virus entry into the cell. This enzyme displays a DNA polymerase activity that can copy either DNA or RNA templates, and a ribonuclease H (RNase H) activity that cleaves the RNA strand of RNA-DNA heteroduplexes in a partially processive 3' to 5' endonucleasic mode. Conversion of viral genomic RNA into dsDNA requires many steps. A tRNA(3)-Lys binds to the primer-binding site (PBS) situated at the 5'-end of the viral RNA. RT uses the 3' end of the tRNA primer to perform a short round of RNA-dependent minus-strand DNA synthesis. The reading proceeds through the U5 region and ends after the repeated (R) region which is present at both ends of viral RNA. The portion of the RNA-DNA heteroduplex is digested by the RNase H, resulting in a ssDNA product attached to the tRNA primer. This ssDNA/tRNA hybridizes with the identical R region situated at the 3' end of viral RNA. This template exchange, known as minus-strand DNA strong stop transfer, can be either intra- or intermolecular. RT uses the 3' end of this newly synthesized short ssDNA to perform the RNA-dependent minus-strand DNA synthesis of the whole template. RNase H digests the RNA template except for two polypurine tracts (PPTs) situated at the 5'-end and near the center of the genome. It is not clear if both polymerase and RNase H activities are simultaneous. RNase H probably can proceed both in a polymerase-dependent (RNA cut into small fragments by the same RT performing DNA synthesis) and a polymerase-independent mode (cleavage of remaining RNA fragments by free RTs). Secondly, RT performs DNA-directed plus-strand DNA synthesis using the PPTs that have not been removed by RNase H as primers. PPTs and tRNA primers are then removed by RNase H. The 3' and 5' ssDNA PBS regions hybridize to form a circular dsDNA intermediate. Strand displacement synthesis by RT to the PBS and PPT ends produces a blunt ended, linear dsDNA copy of the viral genome that includes long terminal repeats (LTRs) at both ends. Functionally, catalyzes viral DNA integration into the host chromosome, by performing a series of DNA cutting and joining reactions. This enzyme activity takes place after virion entry into a cell and reverse transcription of the RNA genome in dsDNA. The first step in the integration process is 3' processing. This step requires a complex comprising the viral genome, matrix protein, Vpr and integrase. This complex is called the pre-integration complex (PIC). The integrase protein removes 2 nucleotides from each 3' end of the viral DNA, leaving recessed CA OH's at the 3' ends. In the second step, the PIC enters cell nucleus. This process is mediated through integrase and Vpr proteins, and allows the virus to infect a non dividing cell. This ability to enter the nucleus is specific of lentiviruses, other retroviruses cannot and rely on cell division to access cell chromosomes. In the third step, termed strand transfer, the integrase protein joins the previously processed 3' ends to the 5' ends of strands of target cellular DNA at the site of integration. The 5'-ends are produced by integrase-catalyzed staggered cuts, 5 bp apart. A Y-shaped, gapped, recombination intermediate results, with the 5'-ends of the viral DNA strands and the 3' ends of target DNA strands remaining unjoined, flanking a gap of 5 bp. The last step is viral DNA integration into host chromosome. This involves host DNA repair synthesis in which the 5 bp gaps between the unjoined strands are filled in and then ligated. Since this process occurs at both cuts flanking the HIV genome, a 5 bp duplication of host DNA is produced at the ends of HIV-1 integration. Alternatively, Integrase may catalyze the excision of viral DNA just after strand transfer, this is termed disintegration. This Human immunodeficiency virus type 2 subtype B (isolate EHO) (HIV-2) protein is Gag-Pol polyprotein (gag-pol).